The sequence spans 602 residues: Glutamyl-tRNA(Gln) amidotransferase subunit B, mitochondrial (602 aa).

The N-terminal 56 residues, 1-56, are a transit peptide targeting the mitochondrion; sequence MFRSCLRHCRRATVRSRTCPRCSHHEIPQLQVVQRQISLSSSFPHIRRLQTSSTDT.

It belongs to the GatB/GatE family. GatB subfamily. As to quaternary structure, subunit of the heterotrimeric GatCAB amidotransferase (AdT) complex, composed of A, B and C subunits.

It localises to the mitochondrion. The enzyme catalyses L-glutamyl-tRNA(Gln) + L-glutamine + ATP + H2O = L-glutaminyl-tRNA(Gln) + L-glutamate + ADP + phosphate + H(+). Allows the formation of correctly charged Gln-tRNA(Gln) through the transamidation of misacylated Glu-tRNA(Gln) in the mitochondria. The reaction takes place in the presence of glutamine and ATP through an activated gamma-phospho-Glu-tRNA(Gln). This is Glutamyl-tRNA(Gln) amidotransferase subunit B, mitochondrial (nempA) from Emericella nidulans (strain FGSC A4 / ATCC 38163 / CBS 112.46 / NRRL 194 / M139) (Aspergillus nidulans).